The primary structure comprises 385 residues: MSDTTYFTDAWQPKEVLDPETETNANESIIQMVFYHKLACIYHIIMSNYTWKQADIQTLISFYETLGEEINPKVQKVQQNSEANSFSEKAKKFGLLDLPIYSKCVDSSQLIAESASRVYHDAKEYMNNGSATEAELYRFVSSILKEVLEPIFNPKEIRNVLKGLITSLVDSRSRDEEIGSDIEKNVKYEVVRFLPESPPNFPGFNDNVSRSITNFIGYFALHTIRHHCYVNFGVDGELKFYQRNMYKKAFDDLRVNKAKPTVSVKPEASLKREPKAETPTLTRVKPEIRNDSDEDFCEIIEPVNFSAVKKSKTRQTSESNAKGGKELKDFPEKYMLEDLDKDDLPMNFKTKFRKLVEQNQMLRDEINDYKELIQLKIAEKKQRMG.

This is an uncharacterized protein from Caenorhabditis elegans.